We begin with the raw amino-acid sequence, 272 residues long: Hydroxyethylthiazole kinase (272 aa).

Residue methionine 44 coordinates substrate. ATP-binding residues include lysine 119 and threonine 172. Glycine 199 provides a ligand contact to substrate.

Belongs to the Thz kinase family. It depends on Mg(2+) as a cofactor.

The catalysed reaction is 5-(2-hydroxyethyl)-4-methylthiazole + ATP = 4-methyl-5-(2-phosphooxyethyl)-thiazole + ADP + H(+). The protein operates within cofactor biosynthesis; thiamine diphosphate biosynthesis; 4-methyl-5-(2-phosphoethyl)-thiazole from 5-(2-hydroxyethyl)-4-methylthiazole: step 1/1. Its function is as follows. Catalyzes the phosphorylation of the hydroxyl group of 4-methyl-5-beta-hydroxyethylthiazole (THZ). The protein is Hydroxyethylthiazole kinase of Enterococcus faecalis (strain ATCC 700802 / V583).